A 334-amino-acid polypeptide reads, in one-letter code: Holliday junction branch migration complex subunit RuvB (334 aa).

Residues 4–184 (ADRLIQPQLQ…FGIPLRLEFY (181 aa)) form a large ATPase domain (RuvB-L) region. Residues R24, G65, K68, T69, T70, 131 to 133 (EDY), R174, Y184, and R221 contribute to the ATP site. Residue T69 coordinates Mg(2+). The tract at residues 185–255 (NVKDLSTIVT…VAEQALDLLD (71 aa)) is small ATPAse domain (RuvB-S). The head domain (RuvB-H) stretch occupies residues 258–334 (GEGFDYMDRK…YLHFGMIKPE (77 aa)). Residues R294, R313, and R318 each contribute to the DNA site.

The protein belongs to the RuvB family. Homohexamer. Forms an RuvA(8)-RuvB(12)-Holliday junction (HJ) complex. HJ DNA is sandwiched between 2 RuvA tetramers; dsDNA enters through RuvA and exits via RuvB. An RuvB hexamer assembles on each DNA strand where it exits the tetramer. Each RuvB hexamer is contacted by two RuvA subunits (via domain III) on 2 adjacent RuvB subunits; this complex drives branch migration. In the full resolvosome a probable DNA-RuvA(4)-RuvB(12)-RuvC(2) complex forms which resolves the HJ.

It is found in the cytoplasm. The enzyme catalyses ATP + H2O = ADP + phosphate + H(+). The RuvA-RuvB-RuvC complex processes Holliday junction (HJ) DNA during genetic recombination and DNA repair, while the RuvA-RuvB complex plays an important role in the rescue of blocked DNA replication forks via replication fork reversal (RFR). RuvA specifically binds to HJ cruciform DNA, conferring on it an open structure. The RuvB hexamer acts as an ATP-dependent pump, pulling dsDNA into and through the RuvAB complex. RuvB forms 2 homohexamers on either side of HJ DNA bound by 1 or 2 RuvA tetramers; 4 subunits per hexamer contact DNA at a time. Coordinated motions by a converter formed by DNA-disengaged RuvB subunits stimulates ATP hydrolysis and nucleotide exchange. Immobilization of the converter enables RuvB to convert the ATP-contained energy into a lever motion, pulling 2 nucleotides of DNA out of the RuvA tetramer per ATP hydrolyzed, thus driving DNA branch migration. The RuvB motors rotate together with the DNA substrate, which together with the progressing nucleotide cycle form the mechanistic basis for DNA recombination by continuous HJ branch migration. Branch migration allows RuvC to scan DNA until it finds its consensus sequence, where it cleaves and resolves cruciform DNA. This is Holliday junction branch migration complex subunit RuvB from Shewanella sp. (strain ANA-3).